The chain runs to 130 residues: Keratin-associated protein 12-1 (130 aa).

14 repeat units span residues 10–14 (CQPSC), 15–29 (CVSS…VSSP), 34–38 (CFVSS), 40–44 (CQPSC), 45–49 (CVSSS), 60–64 (CIPVR), 85–89 (CQSSV), 90–94 (CVPVS), 95–99 (CRPVC), 104–108 (CQSSG), 109–113 (CCQPS), 114–118 (CPTLV), 119–123 (CKPVT), and 124–128 (CSNPS). A 14 X 5 AA approximate repeats region spans residues 10-128 (CQPSCCVSSS…CKPVTCSNPS (119 aa)).

Belongs to the KRTAP type 12 family. As to quaternary structure, interacts with hair keratins. Expressed only in the head and back skin of a 3 day old mouse. Not expressed in adult skin.

In the hair cortex, hair keratin intermediate filaments are embedded in an interfilamentous matrix, consisting of hair keratin-associated proteins (KRTAP), which are essential for the formation of a rigid and resistant hair shaft through their extensive disulfide bond cross-linking with abundant cysteine residues of hair keratins. The matrix proteins include the high-sulfur and high-glycine-tyrosine keratins. This chain is Keratin-associated protein 12-1, found in Mus musculus (Mouse).